The following is a 438-amino-acid chain: Transmembrane protein 184C (438 aa).

7 helical membrane passes run 17–37, 48–68, 86–106, 176–196, 212–232, 254–274, and 287–307; these read LAVV…VWEL, AWFI…WVIL, ILWM…YPSI, VLQY…CELL, YLVI…LLFY, VVFV…VGVI, and AVAT…AAIA. The segment at 358–438 is disordered; sequence PRKKFFPEDQ…EEPSEKPVAS (81 aa). 2 stretches are compositionally biased toward low complexity: residues 374–390 and 404–413; these read SLLS…ASSV and TVTPQTTPTT. The span at 426–438 shows a compositional bias: basic and acidic residues; it reads GVREEPSEKPVAS.

This sequence belongs to the TMEM184 family.

The protein resides in the membrane. Functionally, possible tumor suppressor which may play a role in cell growth. In Bos taurus (Bovine), this protein is Transmembrane protein 184C (TMEM184C).